Consider the following 264-residue polypeptide: Acyl-[acyl-carrier-protein]--UDP-N-acetylglucosamine O-acyltransferase (264 aa).

It belongs to the transferase hexapeptide repeat family. LpxA subfamily. Homotrimer.

It localises to the cytoplasm. It catalyses the reaction a (3R)-hydroxyacyl-[ACP] + UDP-N-acetyl-alpha-D-glucosamine = a UDP-3-O-[(3R)-3-hydroxyacyl]-N-acetyl-alpha-D-glucosamine + holo-[ACP]. It functions in the pathway glycolipid biosynthesis; lipid IV(A) biosynthesis; lipid IV(A) from (3R)-3-hydroxytetradecanoyl-[acyl-carrier-protein] and UDP-N-acetyl-alpha-D-glucosamine: step 1/6. Involved in the biosynthesis of lipid A, a phosphorylated glycolipid that anchors the lipopolysaccharide to the outer membrane of the cell. In Albidiferax ferrireducens (strain ATCC BAA-621 / DSM 15236 / T118) (Rhodoferax ferrireducens), this protein is Acyl-[acyl-carrier-protein]--UDP-N-acetylglucosamine O-acyltransferase.